The chain runs to 148 residues: Cystatin-C (148 aa).

A signal peptide spans 1 to 28 (MARSLGVPLLLLAALVVALALAVSPAAG). Residues 83–87 (QIVSG) carry the Secondary area of contact motif. Cystine bridges form between cysteine 101-cysteine 111 and cysteine 125-cysteine 145.

It belongs to the cystatin family.

It is found in the secreted. This is a thiol proteinase inhibitor. This Oryctolagus cuniculus (Rabbit) protein is Cystatin-C (CST3).